The primary structure comprises 492 residues: Cyclic di-GMP phosphodiesterase VC_1295 (492 aa).

The next 6 membrane-spanning stretches (helical) occupy residues 14 to 34, 49 to 69, 80 to 100, 111 to 131, 160 to 180, and 205 to 225; these read IYHAPLTFGLYALAGVLFALY, EIATQVGAVFILAWLIRHTLL, FIQLDTALLFAMSLPLALYYN, LKVLFGMTLFGFFTGALLQLS, LIGLIVLLISTLTVMLSMVAI, and EFAFLSLVLGGYITAILVLWS. Positions 226–278 constitute an HAMP domain; the sequence is RMMKEILDHQERSLQAVTQGNLQVRLPVYSNDELGNVAMLTNQMLDSLEATQN. Residues 280 to 490 enclose the HD-GYP domain; that stretch reads VKTTRDVAIV…FVAIAAHFKD (211 aa).

Its subcellular location is the cell inner membrane. It catalyses the reaction 3',3'-c-di-GMP + 2 H2O = 2 GMP + 2 H(+). In terms of biological role, phosphodiesterase (PDE) that catalyzes the hydrolysis of cyclic diguanylate (c-di-GMP) to GMP in vitro. Increases motility and decreases biofilm formation in vivo. This is Cyclic di-GMP phosphodiesterase VC_1295 from Vibrio cholerae serotype O1 (strain ATCC 39315 / El Tor Inaba N16961).